A 96-amino-acid chain; its full sequence is Large ribosomal subunit protein bL27 (96 aa).

Residues M1–F9 constitute a propeptide that is removed on maturation. The disordered stretch occupies residues M1 to R33. Residues R22 to R33 are compositionally biased toward basic and acidic residues.

The protein belongs to the bacterial ribosomal protein bL27 family. Post-translationally, the N-terminus is cleaved by ribosomal processing cysteine protease Prp.

The protein is Large ribosomal subunit protein bL27 of Listeria innocua serovar 6a (strain ATCC BAA-680 / CLIP 11262).